The sequence spans 115 residues: Waprin-like protein (115 aa).

Positions 1 to 21 (MNRSLLAFAIVLVLLVAGTSS) are cleaved as a signal peptide. Positions 23-69 (LFNKSGNCPMRNTVTSCTPRCIGDGECSSNQKCCPNKCGTTSCANSS) constitute a WAP domain. Intrachain disulfides connect Cys-30–Cys-56, Cys-39–Cys-60, Cys-43–Cys-55, and Cys-49–Cys-65.

This sequence belongs to the venom waprin family. Cys-rich waprin subfamily. Expressed by the venom gland.

Its subcellular location is the secreted. Antimicrobial peptides with activity against Gram-positive and Gram-negative bacteria as well as fungi. Recognizes carbohydrates in the microbial cell walls, and induces structural damage to them. Also inhibits microbial serine proteases, as well as mammalian elastases. Carbohydrates that are recognized are LPS, mannan, peptidoglycan, and N-acetl-D-glucosamine. This chain is Waprin-like protein, found in Tetramorium bicarinatum (Tramp ant).